The sequence spans 217 residues: Probable transaldolase (217 aa).

Residue K85 is the Schiff-base intermediate with substrate of the active site.

It belongs to the transaldolase family. Type 3B subfamily.

The protein localises to the cytoplasm. It carries out the reaction D-sedoheptulose 7-phosphate + D-glyceraldehyde 3-phosphate = D-erythrose 4-phosphate + beta-D-fructose 6-phosphate. It functions in the pathway carbohydrate degradation; pentose phosphate pathway; D-glyceraldehyde 3-phosphate and beta-D-fructose 6-phosphate from D-ribose 5-phosphate and D-xylulose 5-phosphate (non-oxidative stage): step 2/3. Functionally, transaldolase is important for the balance of metabolites in the pentose-phosphate pathway. This Brachyspira hyodysenteriae (strain ATCC 49526 / WA1) protein is Probable transaldolase.